Reading from the N-terminus, the 40-residue chain is Photosystem II reaction center protein J (40 aa).

Residues 8–28 (IPLWLIGTVVGTPVISLVGIF) traverse the membrane as a helical segment.

The protein belongs to the PsbJ family. PSII is composed of 1 copy each of membrane proteins PsbA, PsbB, PsbC, PsbD, PsbE, PsbF, PsbH, PsbI, PsbJ, PsbK, PsbL, PsbM, PsbT, PsbX, PsbY, PsbZ, Psb30/Ycf12, at least 3 peripheral proteins of the oxygen-evolving complex and a large number of cofactors. It forms dimeric complexes.

It localises to the plastid. Its subcellular location is the chloroplast thylakoid membrane. In terms of biological role, one of the components of the core complex of photosystem II (PSII). PSII is a light-driven water:plastoquinone oxidoreductase that uses light energy to abstract electrons from H(2)O, generating O(2) and a proton gradient subsequently used for ATP formation. It consists of a core antenna complex that captures photons, and an electron transfer chain that converts photonic excitation into a charge separation. The polypeptide is Photosystem II reaction center protein J (Huperzia lucidula (Shining clubmoss)).